A 236-amino-acid chain; its full sequence is Probable transcriptional regulatory protein Suden_1389 (236 aa).

It belongs to the TACO1 family.

It localises to the cytoplasm. The sequence is that of Probable transcriptional regulatory protein Suden_1389 from Sulfurimonas denitrificans (strain ATCC 33889 / DSM 1251) (Thiomicrospira denitrificans (strain ATCC 33889 / DSM 1251)).